A 368-amino-acid chain; its full sequence is N-acetylneuraminate epimerase (368 aa).

The first 19 residues, 1 to 19 (MNKTIMALAIMMASFAANA), serve as a signal peptide directing secretion. Kelch repeat units lie at residues 40-84 (TVYI…AFID), 86-137 (NLYV…FVHN), 139-173 (KAYVTGGVNQNIFNGYFEDLNEAGKDSTAIDKINA), 174-219 (HYFD…VNKG), 222-265 (TWLI…VAGG), 287-336 (ENYQ…PWNN), and 338-367 (LLIIGGETAGGKAVTDSVLISVKDNKVTVQ). Residue E228 is the Proton acceptor of the active site.

Belongs to the NanM family. As to quaternary structure, homodimer.

The protein resides in the periplasm. The catalysed reaction is N-acetyl-alpha-neuraminate = N-acetyl-beta-neuraminate. Its function is as follows. Converts alpha-N-acetylneuranimic acid (Neu5Ac) to the beta-anomer, accelerating the equilibrium between the alpha- and beta-anomers. Probably facilitates sialidase-negative bacteria to compete successfully for limited amounts of extracellular Neu5Ac, which is likely taken up in the beta-anomer. In addition, the rapid removal of sialic acid from solution might be advantageous to the bacterium to damp down host responses. The sequence is that of N-acetylneuraminate epimerase from Shigella sonnei (strain Ss046).